The primary structure comprises 553 residues: Probable malate:quinone oxidoreductase (553 aa).

The span at 534–543 (QLKPQVQPQP) shows a compositional bias: low complexity. The tract at residues 534 to 553 (QLKPQVQPQPAHKAVADIAL) is disordered.

It belongs to the MQO family. FAD is required as a cofactor.

The catalysed reaction is (S)-malate + a quinone = a quinol + oxaloacetate. It functions in the pathway carbohydrate metabolism; tricarboxylic acid cycle; oxaloacetate from (S)-malate (quinone route): step 1/1. The chain is Probable malate:quinone oxidoreductase from Citrobacter koseri (strain ATCC BAA-895 / CDC 4225-83 / SGSC4696).